Here is a 93-residue protein sequence, read N- to C-terminus: NADH-ubiquinone oxidoreductase chain 4L (93 aa).

3 helical membrane passes run 3-23, 27-47, and 55-75; these read LTILLIIIGLIGYIINSGPLG, IIKLFISIEIMLLGVTLLIIL, and ILGLIIGIIVLIITGIESAIG.

This sequence belongs to the complex I subunit 4L family.

It localises to the mitochondrion membrane. The catalysed reaction is a ubiquinone + NADH + 5 H(+)(in) = a ubiquinol + NAD(+) + 4 H(+)(out). Core subunit of the mitochondrial membrane respiratory chain NADH dehydrogenase (Complex I) that is believed to belong to the minimal assembly required for catalysis. Complex I functions in the transfer of electrons from NADH to the respiratory chain. The immediate electron acceptor for the enzyme is believed to be ubiquinone. This is NADH-ubiquinone oxidoreductase chain 4L (ND4L) from Wickerhamomyces canadensis (Yeast).